We begin with the raw amino-acid sequence, 920 residues long: Whirlin (920 aa).

The region spanning 141 to 224 (LVSLRRAKAH…LVLSVYSAGR (84 aa)) is the PDZ 1 domain. The interval 241 to 262 (QGRSTSPPSSLPHGSTLRQHED) is disordered. Residues 242–257 (GRSTSPPSSLPHGSTL) are compositionally biased toward polar residues. One can recognise a PDZ 2 domain in the interval 278-360 (KVNLVLGDGR…LILTVKDVGR (83 aa)). Disordered stretches follow at residues 502-536 (MKARQPPGPGVGDTYSMVSYSDTGSSTGSHGTSTT), 561-603 (CETT…QGHD), 630-730 (FSAP…AMGA), and 752-828 (RALP…PTST). Residues 520-536 (SYSDTGSSTGSHGTSTT) are compositionally biased toward low complexity. Residues 561-570 (CETTQGSTNA) are compositionally biased toward polar residues. Pro residues-rich tracts occupy residues 589-598 (IKPPPPPPPL) and 636-651 (RSPPPPPGIAPTPTPG). Residues 655 to 674 (ARDSPSSPIYASISHANPSS) are compositionally biased toward polar residues. Residue S698 is modified to Phosphoserine. 2 stretches are compositionally biased toward polar residues: residues 756 to 775 (QTRTASTLSQLSDSGQTLSE) and 785 to 800 (EASTSGRGRQTANTKN). The segment covering 802–813 (NGKELPQTERTT) has biased composition (basic and acidic residues). The PDZ 3 domain occupies 829 to 912 (LIRVRKSAAT…TKERDYIDFL (84 aa)).

In terms of assembly, forms homooligomers. Interacts (via C-terminal PDZ domain) with MYO15A; this interaction is necessary for localization of WHRN to stereocilia tips. Interacts (via C-terminal PDZ domain) with MPP1/p55. Interacts with LRRC4C/NGL1. Interacts with MYO7A. Interacts with RPGR. Interacts with EPS8. Interacts with CASK. Interacts with CIB2. Component of USH2 complex, composed of ADGRV1, PDZD7, USH2A and WHRN. Interacts (via PDZ domains) with PDZD7; the interaction is direct. Interacts (via N-terminal PDZ domain) with USH2A (via cytoplasmic region). Interacts with ADGRV1/MASS1 (via cytoplasmic region). As to expression, ubiquitous. Highly expressed in heart, spleen, lung and liver. Highly expressed in brain, in the olfactory bulb, thalamus, layers III-V of the cerebral cortex and the molecular layer of cerebellum. Detected in soma and dendrites of thalamic neurons, and in cerebrum in cell bodies and apical dendrites of pyramidal neurons. Expressed in retina and inner ear.

Its subcellular location is the cytoplasm. The protein resides in the cell projection. It is found in the stereocilium. It localises to the growth cone. The protein localises to the synapse. Its function is as follows. Involved in hearing and vision as member of the USH2 complex. Necessary for elongation and maintenance of inner and outer hair cell stereocilia in the organ of Corti in the inner ear. Involved in the maintenance of the hair bundle ankle region, which connects stereocilia in cochlear hair cells of the inner ear. In retina photoreceptors, required for the maintenance of periciliary membrane complex that seems to play a role in regulating intracellular protein transport. This is Whirlin from Rattus norvegicus (Rat).